The sequence spans 240 residues: MRPVVRKNFLNIEELKRFLNGQTVVSIQPVTGSPLDKTDFIVAMAIAVEQAGAKALRIEGVNNVAAVSAAVTIPIIGIVKRDLPDSPIRITPFVSDVDGLANAGATVIAFDATDRTRPESRERIAQAIKNTGCFAMADCSTFEDGLWANSQGVEIVGSTLSGYVGDIEPTVPDFQLVKAFSEAGFFTMAEGRYNTPELAAKAIESGAVAVTVGSALTRLEVVTQWFNNATQAAGERKCAH.

This sequence belongs to the NanE family.

The catalysed reaction is an N-acyl-D-glucosamine 6-phosphate = an N-acyl-D-mannosamine 6-phosphate. The protein operates within amino-sugar metabolism; N-acetylneuraminate degradation; D-fructose 6-phosphate from N-acetylneuraminate: step 3/5. Its function is as follows. Converts N-acetylmannosamine-6-phosphate (ManNAc-6-P) to N-acetylglucosamine-6-phosphate (GlcNAc-6-P). This chain is Putative N-acetylmannosamine-6-phosphate 2-epimerase, found in Vibrio cholerae serotype O1 (strain ATCC 39315 / El Tor Inaba N16961).